The sequence spans 156 residues: Transcription antitermination protein NusB (156 aa).

It belongs to the NusB family.

In terms of biological role, involved in transcription antitermination. Required for transcription of ribosomal RNA (rRNA) genes. Binds specifically to the boxA antiterminator sequence of the ribosomal RNA (rrn) operons. This is Transcription antitermination protein NusB from Bartonella quintana (strain Toulouse) (Rochalimaea quintana).